The chain runs to 235 residues: Leucyl/phenylalanyl-tRNA--protein transferase (235 aa).

It belongs to the L/F-transferase family.

The protein resides in the cytoplasm. The catalysed reaction is N-terminal L-lysyl-[protein] + L-leucyl-tRNA(Leu) = N-terminal L-leucyl-L-lysyl-[protein] + tRNA(Leu) + H(+). The enzyme catalyses N-terminal L-arginyl-[protein] + L-leucyl-tRNA(Leu) = N-terminal L-leucyl-L-arginyl-[protein] + tRNA(Leu) + H(+). It catalyses the reaction L-phenylalanyl-tRNA(Phe) + an N-terminal L-alpha-aminoacyl-[protein] = an N-terminal L-phenylalanyl-L-alpha-aminoacyl-[protein] + tRNA(Phe). In terms of biological role, functions in the N-end rule pathway of protein degradation where it conjugates Leu, Phe and, less efficiently, Met from aminoacyl-tRNAs to the N-termini of proteins containing an N-terminal arginine or lysine. The sequence is that of Leucyl/phenylalanyl-tRNA--protein transferase from Anaeromyxobacter sp. (strain Fw109-5).